A 149-amino-acid chain; its full sequence is Calmodulin-B (149 aa).

N-acetylalanine is present on Ala2. 4 consecutive EF-hand domains span residues 8-43 (EQIA…LGQN), 44-79 (PTEA…KMKE), 81-116 (DSEE…LGEK), and 117-149 (LTDE…MTCK). Ca(2+) contacts are provided by Asp21, Asp23, Asp25, Thr27, Glu32, Asp57, Asp59, Asn61, Thr63, Glu68, Asp94, Asp96, Asn98, and Glu105. At Lys116 the chain carries N6,N6,N6-trimethyllysine. Ca(2+) is bound by residues Asp130, Asp132, Asp134, Gln136, and Glu141.

It belongs to the calmodulin family.

Calmodulin mediates the control of a large number of enzymes, ion channels and other proteins by Ca(2+). Among the enzymes to be stimulated by the calmodulin-Ca(2+) complex are a number of protein kinases and phosphatases. This is Calmodulin-B from Halocynthia roretzi (Sea squirt).